Consider the following 113-residue polypeptide: DNA-directed RNA polymerase subunit Rpo4 (113 aa).

This sequence belongs to the eukaryotic RPB4 RNA polymerase subunit family. Part of the 13-subunit RNA polymerase complex. Forms a stalk with Rpo7 that extends from the main structure.

It is found in the cytoplasm. The enzyme catalyses RNA(n) + a ribonucleoside 5'-triphosphate = RNA(n+1) + diphosphate. In terms of biological role, DNA-dependent RNA polymerase (RNAP) catalyzes the transcription of DNA into RNA using the four ribonucleoside triphosphates as substrates. This subunit is less well bound than the others. This Saccharolobus solfataricus (strain ATCC 35092 / DSM 1617 / JCM 11322 / P2) (Sulfolobus solfataricus) protein is DNA-directed RNA polymerase subunit Rpo4.